The primary structure comprises 218 residues: Thiopurine S-methyltransferase (218 aa).

S-adenosyl-L-methionine is bound by residues Trp-10, Leu-45, Glu-66, and Arg-123.

This sequence belongs to the class I-like SAM-binding methyltransferase superfamily. TPMT family.

It localises to the cytoplasm. The catalysed reaction is S-adenosyl-L-methionine + a thiopurine = S-adenosyl-L-homocysteine + a thiopurine S-methylether.. The chain is Thiopurine S-methyltransferase from Shewanella denitrificans (strain OS217 / ATCC BAA-1090 / DSM 15013).